The sequence spans 218 residues: uncharacterized protein (218 aa).

The 215-residue stretch at 2 to 216 (IEVLNLTKKI…ETSEKVIYKK (215 aa)) folds into the ABC transporter domain. ATP is bound at residue 34 to 41 (GSNGSGKT).

Belongs to the ABC transporter superfamily.

This is an uncharacterized protein from Bacillus subtilis (strain 168).